The sequence spans 153 residues: Proline-rich membrane anchor 1 (153 aa).

Positions 1–35 (MLLRDLVLRRGCCWSSLLLHCALHPLWGFVQVTHG) are cleaved as a signal peptide. Residues 36–92 (EPQKSCSKVTDSCRHVCQCRPPPPLPPPPPPPPPPRLLSAPAPNSTSCPTEESWWSG) are Extracellular-facing. The 15-residue stretch at 56–70 (PPPPLPPPPPPPPPP) folds into the PRAD domain. A compositionally biased stretch (pro residues) spans 59–71 (PLPPPPPPPPPPR). The segment at 59–79 (PLPPPPPPPPPPRLLSAPAPN) is disordered. Asn-79 carries N-linked (GlcNAc...) asparagine glycosylation. The helical transmembrane segment at 93 to 113 (LVIIIAVCCASLVFLTVLVII) threads the bilayer. Residues 114 to 153 (CYKAIKRKPLRKDENGTSVAEYPMSASQSNKGVDVNNAVV) lie on the Cytoplasmic side of the membrane.

Interacts with ACHE, probably through disulfide bonds.

The protein resides in the cell membrane. The protein localises to the cell junction. It is found in the synapse. Its function is as follows. Required to anchor acetylcholinesterase (ACHE) to the basal lamina of the neuromuscular junction and to the membrane of neuronal synapses in brain. Also able to organize ACHE into tetramers. In Homo sapiens (Human), this protein is Proline-rich membrane anchor 1 (PRIMA1).